The following is a 742-amino-acid chain: Vesicle-fusing ATPase (742 aa).

Residues 499–504 (NGMVDC) and 539–546 (SGSGKTAL) each bind ATP. T544 provides a ligand contact to Mg(2+).

This sequence belongs to the AAA ATPase family. In terms of assembly, homohexamer. Binds to SNARE-SNAP complexes to form 20S particles. Mg(2+) serves as cofactor.

It localises to the cytoplasm. It carries out the reaction ATP + H2O = ADP + phosphate + H(+). Functionally, required for vesicle-mediated transport. Catalyzes the fusion of transport vesicles within the Golgi cisternae. Is also required for transport from the endoplasmic reticulum to the Golgi stack. Seems to function as a fusion protein required for the delivery of cargo proteins to all compartments of the Golgi stack independent of vesicle origin. Required for maintaining the normal morphology of the Golgi apparatus. In Arabidopsis thaliana (Mouse-ear cress), this protein is Vesicle-fusing ATPase.